The primary structure comprises 441 residues: Tryptophan aminotransferase-related protein 1 (441 aa).

Pyridoxal 5'-phosphate is bound by residues tyrosine 110, 152–153 (ST), asparagine 219, 239–242 (DLAY), 262–265 (TVSK), and arginine 273. Lysine 265 bears the N6-(pyridoxal phosphate)lysine mark.

The protein belongs to the alliinase family. Pyridoxal 5'-phosphate serves as cofactor. In terms of tissue distribution, highly expressed in anthers. Expressed at low levels in ovaries.

It catalyses the reaction L-tryptophan + 2-oxoglutarate = indole-3-pyruvate + L-glutamate. It participates in plant hormone metabolism; auxin biosynthesis. In terms of biological role, probable tryptophan aminotransferase that may be involved in the regulation of auxin production in developing rice grains. This Oryza sativa subsp. japonica (Rice) protein is Tryptophan aminotransferase-related protein 1.